Reading from the N-terminus, the 57-residue chain is Mambalgin-3 (57 aa).

Intrachain disulfides connect Cys3–Cys19, Cys12–Cys37, Cys41–Cys49, and Cys50–Cys55.

Belongs to the three-finger toxin family. Short-chain subfamily. Mambalgin sub-subfamily. In terms of tissue distribution, expressed by the venom gland.

It localises to the secreted. In terms of biological role, this three-finger toxin inhibits ASIC channels. It acts as a gating modifier toxin by decreasing the apparent proton sensitivity of activation and by slightly increasing the apparent proton sensitivity for inactivation. It binds more tightly to the closed state and to a much lesser extent the inactivated/desensitized state of ASIC1a. It interacts directly with the outside surface of the thumb domain of chicken ASIC1a (ASIC1a), but does not insert into the acidic pocket as suggested previously. This binding leads to relocation of the thumb domain that could disrupt the acidic pocket of cASIC1a. The peptide exerts both stimulatory and inhibitory effects on ASIC1a. It reversibly inhibits rASIC1a (IC(50)=17 nM), rASIC1b (IC(50)= 44 nM) and rASIC1a-rASIC2a (IC(50)=252 nM) channels. In vivo, it shows a potent naloxone-resistant analgesic effect against acute and inflammatory pain upon central and peripheral injection. In addition, it also has an opioid-independent effect on both thermal and mechanical inflammatory pain after systemic administration and is effective against neuropathic pain. The protein is Mambalgin-3 of Dendroaspis angusticeps (Eastern green mamba).